The sequence spans 83 residues: NADH dehydrogenase [ubiquinone] iron-sulfur protein 5-B (83 aa).

Residues 11 to 52 (KGRCYDFWMDFSECMSHCREPKDCTLLREDYLECLHHSKEFQ) enclose the CHCH domain. Short sequence motifs (cx9C motif) lie at residues 14–24 (CYDFWMDFSEC) and 34–44 (CTLLREDYLEC). Cystine bridges form between Cys14–Cys44 and Cys24–Cys34. A disordered region spans residues 62–83 (QRKLRAASRKGEETGDGTHTHH).

Belongs to the complex I NDUFS5 subunit family. Complex I is composed of at least 49 different subunits. This is a component of the iron-sulfur (IP) fragment of the enzyme.

The protein localises to the mitochondrion. It is found in the mitochondrion inner membrane. It localises to the mitochondrion intermembrane space. In terms of biological role, accessory subunit of the mitochondrial membrane respiratory chain NADH dehydrogenase (Complex I), that is believed not to be involved in catalysis. Complex I functions in the transfer of electrons from NADH to the respiratory chain. The immediate electron acceptor for the enzyme is believed to be ubiquinone. In Arabidopsis thaliana (Mouse-ear cress), this protein is NADH dehydrogenase [ubiquinone] iron-sulfur protein 5-B.